The following is a 162-amino-acid chain: 2-C-methyl-D-erythritol 2,4-cyclodiphosphate synthase (162 aa).

A divalent metal cation contacts are provided by Asp8 and His10. 4-CDP-2-C-methyl-D-erythritol 2-phosphate contacts are provided by residues 8 to 10 (DVH) and 36 to 37 (HS). His44 serves as a coordination point for a divalent metal cation. Residues 58-60 (DIG), 63-67 (FPDTD), 102-108 (AQAPKMA), 134-137 (TTTE), Phe141, and Arg144 contribute to the 4-CDP-2-C-methyl-D-erythritol 2-phosphate site.

The protein belongs to the IspF family. As to quaternary structure, homotrimer. Requires a divalent metal cation as cofactor.

The catalysed reaction is 4-CDP-2-C-methyl-D-erythritol 2-phosphate = 2-C-methyl-D-erythritol 2,4-cyclic diphosphate + CMP. The protein operates within isoprenoid biosynthesis; isopentenyl diphosphate biosynthesis via DXP pathway; isopentenyl diphosphate from 1-deoxy-D-xylulose 5-phosphate: step 4/6. Its function is as follows. Involved in the biosynthesis of isopentenyl diphosphate (IPP) and dimethylallyl diphosphate (DMAPP), two major building blocks of isoprenoid compounds. Catalyzes the conversion of 4-diphosphocytidyl-2-C-methyl-D-erythritol 2-phosphate (CDP-ME2P) to 2-C-methyl-D-erythritol 2,4-cyclodiphosphate (ME-CPP) with a corresponding release of cytidine 5-monophosphate (CMP). This is 2-C-methyl-D-erythritol 2,4-cyclodiphosphate synthase from Yersinia pseudotuberculosis serotype O:1b (strain IP 31758).